A 79-amino-acid chain; its full sequence is uncharacterized protein (79 aa).

This is an uncharacterized protein from Saccharomyces cerevisiae (strain ATCC 204508 / S288c) (Baker's yeast).